A 284-amino-acid polypeptide reads, in one-letter code: Bifunctional protein FolD 1 (284 aa).

NADP(+) is bound by residues 166-168 (GAS) and Ile232.

This sequence belongs to the tetrahydrofolate dehydrogenase/cyclohydrolase family. Homodimer.

The catalysed reaction is (6R)-5,10-methylene-5,6,7,8-tetrahydrofolate + NADP(+) = (6R)-5,10-methenyltetrahydrofolate + NADPH. It catalyses the reaction (6R)-5,10-methenyltetrahydrofolate + H2O = (6R)-10-formyltetrahydrofolate + H(+). It functions in the pathway one-carbon metabolism; tetrahydrofolate interconversion. Its function is as follows. Catalyzes the oxidation of 5,10-methylenetetrahydrofolate to 5,10-methenyltetrahydrofolate and then the hydrolysis of 5,10-methenyltetrahydrofolate to 10-formyltetrahydrofolate. This is Bifunctional protein FolD 1 from Pseudomonas syringae pv. syringae (strain B728a).